A 77-amino-acid polypeptide reads, in one-letter code: MTEKQQTFAEAMTALEEIVRQLEQGDVPLENAIDLYKQGMELSKFCHSKLQHAEEQLVSIVQETGETTAFDPLKGEN.

Belongs to the XseB family. In terms of assembly, heterooligomer composed of large and small subunits.

The protein resides in the cytoplasm. The enzyme catalyses Exonucleolytic cleavage in either 5'- to 3'- or 3'- to 5'-direction to yield nucleoside 5'-phosphates.. In terms of biological role, bidirectionally degrades single-stranded DNA into large acid-insoluble oligonucleotides, which are then degraded further into small acid-soluble oligonucleotides. This chain is Exodeoxyribonuclease 7 small subunit, found in Lysinibacillus sphaericus (strain C3-41).